Consider the following 694-residue polypeptide: DNA ligase (694 aa).

Residues 41 to 45 (DAEFD), 91 to 92 (SL), and Glu121 each bind NAD(+). Lys123 functions as the N6-AMP-lysine intermediate in the catalytic mechanism. Residues Arg144, Glu184, Lys300, and Lys324 each contribute to the NAD(+) site. Cys418, Cys421, Cys437, and Cys443 together coordinate Zn(2+). In terms of domain architecture, BRCT spans 607–694 (SVLPTCEGLT…QGPPVQQVVD (88 aa)).

This sequence belongs to the NAD-dependent DNA ligase family. LigA subfamily. It depends on Mg(2+) as a cofactor. Requires Mn(2+) as cofactor.

The catalysed reaction is NAD(+) + (deoxyribonucleotide)n-3'-hydroxyl + 5'-phospho-(deoxyribonucleotide)m = (deoxyribonucleotide)n+m + AMP + beta-nicotinamide D-nucleotide.. Its function is as follows. DNA ligase that catalyzes the formation of phosphodiester linkages between 5'-phosphoryl and 3'-hydroxyl groups in double-stranded DNA using NAD as a coenzyme and as the energy source for the reaction. It is essential for DNA replication and repair of damaged DNA. The chain is DNA ligase from Mycobacterium leprae (strain TN).